Reading from the N-terminus, the 396-residue chain is L-lactate dehydrogenase (396 aa).

One can recognise an FMN hydroxy acid dehydrogenase domain in the interval 1–380 (MIISAASDYR…TQDSLVQVLG (380 aa)). Position 24 (Tyr24) interacts with substrate. Residues Ser106 and Gln127 each contribute to the FMN site. Tyr129 provides a ligand contact to substrate. An FMN-binding site is contributed by Thr155. Arg164 contacts substrate. Position 251 (Lys251) interacts with FMN. His275 acts as the Proton acceptor in catalysis. Position 278 (Arg278) interacts with substrate. Residue 306-330 (DSGIRNGLDVVRMIALGADTVLLGR) coordinates FMN.

This sequence belongs to the FMN-dependent alpha-hydroxy acid dehydrogenase family. It depends on FMN as a cofactor.

The protein resides in the cell inner membrane. It carries out the reaction (S)-lactate + A = pyruvate + AH2. Its function is as follows. Catalyzes the conversion of L-lactate to pyruvate. Is coupled to the respiratory chain. This Escherichia coli O1:K1 / APEC protein is L-lactate dehydrogenase.